The chain runs to 825 residues: Fibrous sheath CABYR-binding protein (825 aa).

Disordered stretches follow at residues 1–43 (MVGK…SYSA) and 113–139 (QDVE…RTGY). Polar residues predominate over residues 21–40 (KSSSPKATHRIGNTSGSKGS). Ser-160 carries the post-translational modification Phosphoserine. Disordered regions lie at residues 168–232 (SRPD…LLED), 244–718 (QEGS…DKHS), and 732–751 (GEAS…EDEA). A compositionally biased stretch (polar residues) spans 200–220 (PATNSNEEIGQKNISRTSFTQ). The span at 277–290 (ATAKAEPRPAEETH) shows a compositional bias: basic and acidic residues. Low complexity-rich tracts occupy residues 348-357 (AEILPPSAEE) and 398-407 (PLPAEGALEE). The segment covering 610–676 (VQPPPAEEAP…PAEVQPPPAE (67 aa)) has biased composition (pro residues).

In terms of assembly, interacts with CABYR. Interacts with ROPN1 and ROPN1L; the interaction increases upon spermatozoa capacitation conditions. Phosphorylated by PKA upon spermatozoa capacitation conditions.

The protein localises to the cell projection. Its subcellular location is the cilium. It localises to the flagellum. In terms of biological role, may be involved in the later stages of fibrous sheath biogenesis and spermatozoa capacitation. Inhibits ROPN1 and ROPN1L SUMOylation. Binds calcium. In Homo sapiens (Human), this protein is Fibrous sheath CABYR-binding protein (FSCB).